The sequence spans 383 residues: Putative glutamate--cysteine ligase 2-2 (383 aa).

This sequence belongs to the glutamate--cysteine ligase type 2 family. YbdK subfamily.

It catalyses the reaction L-cysteine + L-glutamate + ATP = gamma-L-glutamyl-L-cysteine + ADP + phosphate + H(+). Its function is as follows. ATP-dependent carboxylate-amine ligase which exhibits weak glutamate--cysteine ligase activity. This Paenarthrobacter aurescens (strain TC1) protein is Putative glutamate--cysteine ligase 2-2.